The primary structure comprises 470 residues: MFTFAAFSALLISLAGVVAQTTGTSVDSSILTKTADSTGPSGFSIPALSELTSGAPTDSTVALYSTFAAGATPTVSGAPVLPTSALTIADYPALDVTPPTNSSLVKDWMAKIDLSKVPSYNVTTGDCSTDAAAISDGRCWWTCGGCTRETDIVECPDKNVWGLSYDDGPSPFTPLLIDYLQEKNIKTTFFVVGSRVLSRPEMLQTEYMSGHQISIHTWSHPALTTLTNEEIVAELGWTMKVIKDTLGVTPNTFRPPYGDIDDRVRAIAAQMGLTPVIWTSYTDGSTTVNFDTNDWHISGGTATGASSYETFEKILTEYAPKLDTGFITLEHDIYQQSVDLAVGYILPQVLANGTYQLKSIINCLGKDTSEAYIETSSNQTTTQITAATGSQSTFFQPIVGTATGAEVSAPSEATGSTAAGSAASTTSGSGASASTGAASNTSSSGSGRSATMGGALIALAAVAVGMVYVA.

The N-terminal stretch at 1 to 19 (MFTFAAFSALLISLAGVVA) is a signal peptide. 2 N-linked (GlcNAc...) asparagine glycosylation sites follow: Asn-101 and Asn-121. A disulfide bridge connects residues Cys-155 and Cys-363. In terms of domain architecture, NodB homology spans 159-358 (NVWGLSYDDG…VLANGTYQLK (200 aa)). Asp-166 (proton acceptor) is an active-site residue. Acetate is bound at residue Asp-166. Residues Asp-167, His-216, and His-220 each contribute to the Co(2+) site. Residue Tyr-257 participates in acetate binding. The active-site Proton donor is the His-331. N-linked (GlcNAc...) asparagine glycans are attached at residues Asn-352, Asn-378, and Asn-440. Residues 406-447 (EVSAPSEATGSTAAGSAASTTSGSGASASTGAASNTSSSGSG) form a disordered region. The span at 408-447 (SAPSEATGSTAAGSAASTTSGSGASASTGAASNTSSSGSG) shows a compositional bias: low complexity. A lipid anchor (GPI-anchor amidated serine) is attached at Ser-444. A propeptide spans 445 to 470 (GSGRSATMGGALIALAAVAVGMVYVA) (removed in mature form).

The protein belongs to the polysaccharide deacetylase family. Requires Co(2+) as cofactor.

It localises to the secreted. Its subcellular location is the cell wall. It is found in the cell membrane. It carries out the reaction [(1-&gt;4)-N-acetyl-beta-D-glucosaminyl](n) + n H2O = chitosan + n acetate. Functionally, hydrolyzes the N-acetamido groups of N-acetyl-D-glucosamine residues in chitin to form chitosan and acetate. Chitosan is required to anchor melanin to the cell wall, for maintenance of cell wall integrity, and for proper cytokinesis. Plays a major role in synthesizing cell wall chitosan during host infection; chitosan offers an advantage during infection as it is less readily detected than chitin by host immunosurveillance mechanisms. The sequence is that of Chitin deacetylase 1 from Cryptococcus neoformans var. grubii serotype A (strain H99 / ATCC 208821 / CBS 10515 / FGSC 9487) (Filobasidiella neoformans var. grubii).